A 195-amino-acid polypeptide reads, in one-letter code: MDINKLIAMFAKLPSFGPSSSRRIVLHLLRNKEEIMLPLASGIQDLAFQAKECPVCFNIDVKSPCSICSDTKRDHQLLCIVEELGDLWAFEKGKIYQGVYHVLGGTLSAIYGIGPDQLNLDSIVERIKKFNVQEVIIGIGNTMDGQVTTHYITQMVKELGIKVTRLACGIPMGGEIDYLDEGTLSAALSSRYIIS.

The segment at C53–C68 adopts a C4-type zinc-finger fold. The Toprim domain maps to Q76–P171.

It belongs to the RecR family.

Its function is as follows. May play a role in DNA repair. It seems to be involved in an RecBC-independent recombinational process of DNA repair. It may act with RecF and RecO. This chain is Recombination protein RecR, found in Ehrlichia chaffeensis (strain ATCC CRL-10679 / Arkansas).